Here is a 206-residue protein sequence, read N- to C-terminus: 3-isopropylmalate dehydratase small subunit (206 aa).

It belongs to the LeuD family. LeuD type 1 subfamily. Heterodimer of LeuC and LeuD.

It carries out the reaction (2R,3S)-3-isopropylmalate = (2S)-2-isopropylmalate. The protein operates within amino-acid biosynthesis; L-leucine biosynthesis; L-leucine from 3-methyl-2-oxobutanoate: step 2/4. Its function is as follows. Catalyzes the isomerization between 2-isopropylmalate and 3-isopropylmalate, via the formation of 2-isopropylmaleate. This Leptospira borgpetersenii serovar Hardjo-bovis (strain L550) protein is 3-isopropylmalate dehydratase small subunit.